Consider the following 148-residue polypeptide: Large ribosomal subunit protein bL9 (148 aa).

This sequence belongs to the bacterial ribosomal protein bL9 family.

In terms of biological role, binds to the 23S rRNA. This Pseudomonas fluorescens (strain ATCC BAA-477 / NRRL B-23932 / Pf-5) protein is Large ribosomal subunit protein bL9.